A 433-amino-acid chain; its full sequence is Homoserine dehydrogenase (433 aa).

NADPH-binding residues include threonine 12, valine 13, and lysine 102. Valine 13 lines the NAD(+) pocket. NADP(+)-binding residues include valine 13 and lysine 102. Na(+) contacts are provided by glutamate 126, valine 129, glycine 131, and isoleucine 133. Glycine 184 and glutamate 187 together coordinate NADP(+). 2 residues coordinate L-homoserine: glutamate 187 and aspartate 198. Catalysis depends on lysine 202, which acts as the Proton donor. Residue glycine 303 participates in NADPH binding. Glycine 303 contributes to the NAD(+) binding site. Glycine 303 provides a ligand contact to NADP(+). The 78-residue stretch at 356–433 (YCRFLCADVP…EIPSVIRVLS (78 aa)) folds into the ACT domain.

The protein belongs to the homoserine dehydrogenase family. The cofactor is a metal cation.

It catalyses the reaction L-homoserine + NADP(+) = L-aspartate 4-semialdehyde + NADPH + H(+). The catalysed reaction is L-homoserine + NAD(+) = L-aspartate 4-semialdehyde + NADH + H(+). It functions in the pathway amino-acid biosynthesis; L-methionine biosynthesis via de novo pathway; L-homoserine from L-aspartate: step 3/3. Its pathway is amino-acid biosynthesis; L-threonine biosynthesis; L-threonine from L-aspartate: step 3/5. Functionally, catalyzes the conversion of L-aspartate-beta-semialdehyde (L-Asa) to L-homoserine (L-Hse), the third step in the biosynthesis of threonine and methionine from aspartate. The sequence is that of Homoserine dehydrogenase (hom) from Synechocystis sp. (strain ATCC 27184 / PCC 6803 / Kazusa).